The sequence spans 436 residues: Glutamyl-tRNA(Gln) amidotransferase subunit D (436 aa).

The Asparaginase/glutaminase domain occupies 91–420 (QNISIISTGG…GEVAKLMNKN (330 aa)). Active-site residues include Thr101, Thr177, Asp178, and Lys254.

It belongs to the asparaginase 1 family. GatD subfamily. In terms of assembly, heterodimer of GatD and GatE.

The catalysed reaction is L-glutamyl-tRNA(Gln) + L-glutamine + ATP + H2O = L-glutaminyl-tRNA(Gln) + L-glutamate + ADP + phosphate + H(+). Functionally, allows the formation of correctly charged Gln-tRNA(Gln) through the transamidation of misacylated Glu-tRNA(Gln) in organisms which lack glutaminyl-tRNA synthetase. The reaction takes place in the presence of glutamine and ATP through an activated gamma-phospho-Glu-tRNA(Gln). The GatDE system is specific for glutamate and does not act on aspartate. This is Glutamyl-tRNA(Gln) amidotransferase subunit D from Methanobrevibacter smithii (strain ATCC 35061 / DSM 861 / OCM 144 / PS).